Consider the following 265-residue polypeptide: 4-hydroxy-tetrahydrodipicolinate reductase (265 aa).

NAD(+)-binding positions include 7 to 12 and aspartate 33; that span reads GASGRM. Arginine 34 lines the NADP(+) pocket. NAD(+)-binding positions include 96–98 and 120–123; these read GTT and AANM. Histidine 153 functions as the Proton donor/acceptor in the catalytic mechanism. Histidine 154 is a (S)-2,3,4,5-tetrahydrodipicolinate binding site. Lysine 157 functions as the Proton donor in the catalytic mechanism. 163-164 lines the (S)-2,3,4,5-tetrahydrodipicolinate pocket; sequence GT.

Belongs to the DapB family.

It localises to the cytoplasm. The catalysed reaction is (S)-2,3,4,5-tetrahydrodipicolinate + NAD(+) + H2O = (2S,4S)-4-hydroxy-2,3,4,5-tetrahydrodipicolinate + NADH + H(+). It catalyses the reaction (S)-2,3,4,5-tetrahydrodipicolinate + NADP(+) + H2O = (2S,4S)-4-hydroxy-2,3,4,5-tetrahydrodipicolinate + NADPH + H(+). Its pathway is amino-acid biosynthesis; L-lysine biosynthesis via DAP pathway; (S)-tetrahydrodipicolinate from L-aspartate: step 4/4. Functionally, catalyzes the conversion of 4-hydroxy-tetrahydrodipicolinate (HTPA) to tetrahydrodipicolinate. The polypeptide is 4-hydroxy-tetrahydrodipicolinate reductase (Burkholderia lata (strain ATCC 17760 / DSM 23089 / LMG 22485 / NCIMB 9086 / R18194 / 383)).